We begin with the raw amino-acid sequence, 20 residues long: 7.2 kDa cytotoxin RVV-7 (20 aa).

Monomer. Homodimerizes during storage at 30 degrees Celsius (observed after 3 days). As to expression, expressed by the venom gland.

It is found in the secreted. The protein resides in the target cell membrane. Functionally, this three-finger cytotoxin shows cytotoxicity and direct nephrotoxicity. The cytotoxicity has been observed on B16F10 melanoma cells (EC(50)=2.56 uM) and on kidney proximal tubular epithelium LLCPK1 cells (EC(50)=4.79 uM); it is due to necrotic cell death and not to apoptosis. Direct nephrotoxicity has been deduced from binding to LLCPK1 cell line and to kidney membranes. In addition, after intravenous injection into mice tail vein, the toxin principally accumulates in kidney, but only minimally in blood, liver and brain. This Daboia russelii (Russel's viper) protein is 7.2 kDa cytotoxin RVV-7.